A 474-amino-acid chain; its full sequence is Glutamate--tRNA ligase (474 aa).

A 'HIGH' region motif is present at residues 9-19; it reads PSPTGYLHVGG. The 'KMSKS' region signature appears at 240–244; sequence KLSKR. Lys243 is an ATP binding site.

This sequence belongs to the class-I aminoacyl-tRNA synthetase family. Glutamate--tRNA ligase type 1 subfamily. As to quaternary structure, monomer.

Its subcellular location is the cytoplasm. It carries out the reaction tRNA(Glu) + L-glutamate + ATP = L-glutamyl-tRNA(Glu) + AMP + diphosphate. Catalyzes the attachment of glutamate to tRNA(Glu) in a two-step reaction: glutamate is first activated by ATP to form Glu-AMP and then transferred to the acceptor end of tRNA(Glu). In Aliivibrio fischeri (strain MJ11) (Vibrio fischeri), this protein is Glutamate--tRNA ligase.